A 254-amino-acid polypeptide reads, in one-letter code: MVVWALVMPSVPTKGLAETIRSGIDRVEPKEEPPKVPQAPKRDLKPGEIIEERTENTKVYYNGDGTFTKKIYFEPIHVKKKGQKIFEEVSSSLTDSTNNTNYVETENTILETNFYKKMVDGEYANFHYNGYSISYSILEAAGNDVQSIKAKDVAAVYKKKDNKILHKNIFPSIDLQNITFNESTKEDLVLHSVGYHIFKFRLKTDLQADIQDDGSILLTNQEHEKVFELPKPFMVDSNVDEHSGEVQRLRECNV.

Positions aspartate 25–proline 46 are disordered.

The protein resides in the secreted. Its subcellular location is the cell wall. This Geobacillus stearothermophilus (Bacillus stearothermophilus) protein is Wall-associated protein (wapA').